The following is a 192-amino-acid chain: Transcription termination/antitermination protein NusG (192 aa).

One can recognise a KOW domain in the interval 140-168 (VGEVVTVTDGPFETFMGTVEEIDKERNRL).

The protein belongs to the NusG family.

Its function is as follows. Participates in transcription elongation, termination and antitermination. The protein is Transcription termination/antitermination protein NusG of Rickettsia typhi (strain ATCC VR-144 / Wilmington).